Reading from the N-terminus, the 1602-residue chain is MAP kinase-activating death domain protein (1602 aa).

The uDENN domain occupies 13–267; that stretch reads YLVIVGARHP…VPVSGQKRVD (255 aa). Residues 105 to 121 are compositionally biased toward basic and acidic residues; sequence PKEKAEGGAGPRGKEGA. Positions 105-167 are disordered; that stretch reads PKEKAEGGAG…GKRRAKAGNR (63 aa). The segment covering 126 to 137 has biased composition (low complexity); the sequence is ASEEAATESSES. The span at 138-156 shows a compositional bias: polar residues; that stretch reads GSTLQPPSADSTPDVNQSP. Residue serine 155 is modified to Phosphoserine. Over residues 157–166 the composition is skewed to basic residues; sequence RGKRRAKAGN. A cDENN domain is found at 288–428; it reads RFTLVDFPLH…ESLELKKHLK (141 aa). The dDENN domain maps to 430–564; that stretch reads ALASMSLNTQ…LNPSNYAFQR (135 aa). Disordered regions lie at residues 603 to 635 and 676 to 840; these read ALSV…SSYS and QPQK…NSTE. The segment covering 614 to 629 has biased composition (acidic residues); that stretch reads SDPTDDSGSDSMDYDD. Serine 688 and serine 691 each carry phosphoserine. Residues 688–698 show a composition bias toward polar residues; it reads SENSQENLPLR. The span at 699 to 711 shows a compositional bias: low complexity; sequence SSSSTTASSSPST. Serine 778 bears the Phosphoserine mark. Residues 789-803 show a composition bias toward polar residues; sequence ESYTPRFSQHASGSR. Serine 812, serine 817, and serine 819 each carry phosphoserine. Low complexity predominate over residues 826-839; the sequence is RASSPNSTVSNNST. Phosphoserine occurs at positions 857, 861, 895, 900, and 909. Disordered regions lie at residues 870 to 920, 1030 to 1089, and 1113 to 1231; these read KGAR…SSEN, KEPD…DTRS, and TEEK…RSSE. The segment covering 911–920 has biased composition (polar residues); it reads QGRSSNSSEN. Position 1038 is a phosphoserine (serine 1038). A phosphothreonine mark is found at threonine 1040 and threonine 1045. A Phosphoserine modification is found at serine 1089. Positions 1119-1134 are enriched in polar residues; it reads QISADSGVSLASASQR. A compositionally biased stretch (low complexity) spans 1151–1162; sequence SSSQDSEVSNSS. A compositionally biased stretch (polar residues) spans 1191 to 1209; that stretch reads SRATLSDSEIETNSATSTI. Threonine 1194 is modified (phosphothreonine). Serine 1196 and serine 1225 each carry phosphoserine. Residues 1295 to 1370 enclose the Death domain; the sequence is GMDQGPQEMI…GLVYSQQINE (76 aa).

This sequence belongs to the MADD family. Interacts (via death domain) with TNFRSF1A (via death domain). Interacts with PIDD1. Interacts with YWHAZ. Interacts (via death domain) with KIF1B; links the motor KIF1B to Rab3-carrying vesicles in anterograde synaptic vesicle transport. Interacts with KIF1A. Interacts (via uDENN domain) with RAB3A, RAB3B, RAB3C and RAB3D; the GTP-bound form of the Rab proteins is preferred for interaction. Expressed in all tissues examined with the highest expression in brain.

Its subcellular location is the cell membrane. The protein localises to the cytoplasm. It localises to the cell projection. It is found in the axon. Functionally, guanyl-nucleotide exchange factor that regulates small GTPases of the Rab family. Converts GDP-bound inactive form of RAB27A and RAB27B to the GTP-bound active forms. Converts GDP-bound inactive form of RAB3A, RAB3C and RAB3D to the GTP-bound active forms, GTPases involved in synaptic vesicle exocytosis and vesicle secretion. Plays a role in synaptic vesicle formation and in vesicle trafficking at the neuromuscular junction. Involved in up-regulating a post-docking step of synaptic exocytosis in central synapses. Probably by binding to the motor proteins KIF1B and KIF1A, mediates motor-dependent transport of GTP-RAB3A-positive vesicles to the presynaptic nerve terminals. Plays a role in TNFA-mediated activation of the MAPK pathway, including ERK1/2. May link TNFRSF1A with MAP kinase activation. May be involved in the regulation of TNFA-induced apoptosis. The chain is MAP kinase-activating death domain protein from Rattus norvegicus (Rat).